The following is a 37-amino-acid chain: Large ribosomal subunit protein bL36c (37 aa).

Belongs to the bacterial ribosomal protein bL36 family.

Its subcellular location is the plastid. The protein localises to the chloroplast. This is Large ribosomal subunit protein bL36c (rpl36) from Euglena gracilis.